A 650-amino-acid chain; its full sequence is Gamma-tubulin complex component 4 homolog (650 aa).

S214 is modified (phosphoserine). Residue T216 is modified to Phosphothreonine. Phosphoserine is present on S218.

This sequence belongs to the TUBGCP family.

The protein resides in the cytoplasm. Its subcellular location is the cytoskeleton. The protein localises to the microtubule organizing center. It is found in the centrosome. In terms of biological role, gamma-tubulin complex is necessary for microtubule nucleation at the centrosome. In Drosophila melanogaster (Fruit fly), this protein is Gamma-tubulin complex component 4 homolog (Grip75).